A 652-amino-acid polypeptide reads, in one-letter code: MKKRIRELTDLLNQYRQEYYTNDAPSVSDSEYDKLYRELVELEQTYPAYILKDSPTQLVGGTILTGFQKYQHQYPLFSLQDAFSREELNAFDQRIKSAFPEAEYLAELKIDGLSISLVYEAGILKVGATRGDGTIGENITENIKNIKDIPKRLSQALDVTIRGEAYMSRKAFKTINEERQENGEPEFANPRNAAAGTLRQLDTRIVAKRQLATFLYQEVGLEAADSQQRTLERLADLGFSVNSHYLLSSSMNDIWDFIQSIEATREELPYEIDGVVVKVNQLAIQEELGFTVKAPRWAIAYKFPAEEKEAEIVSVDWTVGRTGVVTPTANLTPVQLAGTTVSRATLHNVDYIAEKDIRIGDTVVVYKAGDIIPAVLRVVEAKRSNQTPMPIPTACPSCQSQLVHFEDEVALRCINPLCPSLIQRSLEHFASRQAMNIAGLGPAVVEKLYSAGLVHDVTDIYRLSLEDLLMLDGIKEKSAEKLLAAIEQSKANSAEKLLFGLGIRHIGAKASRLILETYGDLETLLSVTAEELAQIDGLGLVIGQSLVQYFQQDQATQLLAELKSAGVNLAYLGQRPDRQAELFGLTVVLTGKLEKLNRTQAKEKLEQLGAKVTGSVSKKTDLVVAGSEAGSKLAKAQQLGIRIEDEDWLLNL.

NAD(+) contacts are provided by residues 29 to 33 (DSEYD), 78 to 79 (SL), and Glu107. The active-site N6-AMP-lysine intermediate is Lys109. Residues Arg130, Glu164, Lys278, and Lys302 each contribute to the NAD(+) site. Zn(2+)-binding residues include Cys395, Cys398, Cys413, and Cys418. In terms of domain architecture, BRCT spans 577 to 652 (DRQAELFGLT…IEDEDWLLNL (76 aa)).

The protein belongs to the NAD-dependent DNA ligase family. LigA subfamily. The cofactor is Mg(2+). It depends on Mn(2+) as a cofactor.

It catalyses the reaction NAD(+) + (deoxyribonucleotide)n-3'-hydroxyl + 5'-phospho-(deoxyribonucleotide)m = (deoxyribonucleotide)n+m + AMP + beta-nicotinamide D-nucleotide.. Its function is as follows. DNA ligase that catalyzes the formation of phosphodiester linkages between 5'-phosphoryl and 3'-hydroxyl groups in double-stranded DNA using NAD as a coenzyme and as the energy source for the reaction. It is essential for DNA replication and repair of damaged DNA. In Streptococcus equi subsp. zooepidemicus (strain MGCS10565), this protein is DNA ligase.